Reading from the N-terminus, the 197-residue chain is dCTP deaminase (197 aa).

DCTP contacts are provided by residues 110–115 (RSSLAR), Asp-128, 136–138 (VLE), Tyr-171, and Gln-182. The Proton donor/acceptor role is filled by Glu-138.

This sequence belongs to the dCTP deaminase family. In terms of assembly, homotrimer.

It carries out the reaction dCTP + H2O + H(+) = dUTP + NH4(+). Its pathway is pyrimidine metabolism; dUMP biosynthesis; dUMP from dCTP (dUTP route): step 1/2. In terms of biological role, catalyzes the deamination of dCTP to dUTP. In Alteromonas mediterranea (strain DSM 17117 / CIP 110805 / LMG 28347 / Deep ecotype), this protein is dCTP deaminase.